Here is a 175-residue protein sequence, read N- to C-terminus: Pathogenesis-related protein 1A1 (175 aa).

Residues 1–21 form the signal peptide; the sequence is MKSSIFVACFITFIIFHSSQA. The region spanning 29 to 146 is the SCP domain; the sequence is LNAHNAARRR…SGWVFITCNY (118 aa). Intrachain disulfides connect C65–C135, C108–C114, and C130–C144.

Belongs to the CRISP family.

In terms of biological role, probably involved in the defense reaction of plants against pathogens. The sequence is that of Pathogenesis-related protein 1A1 from Solanum lycopersicum (Tomato).